A 286-amino-acid chain; its full sequence is Elongation factor Ts (286 aa).

The segment at 79 to 82 is involved in Mg(2+) ion dislocation from EF-Tu; sequence TDFV.

The protein belongs to the EF-Ts family.

Its subcellular location is the cytoplasm. Associates with the EF-Tu.GDP complex and induces the exchange of GDP to GTP. It remains bound to the aminoacyl-tRNA.EF-Tu.GTP complex up to the GTP hydrolysis stage on the ribosome. The sequence is that of Elongation factor Ts from Wolbachia sp. subsp. Drosophila simulans (strain wRi).